Here is a 200-residue protein sequence, read N- to C-terminus: MFSPCTVKEKRSTLRSVAPNPESSVIPPIPLPSRRYKTRHIDALCSLMHLCLLRKDYPRASRAFSLLLRSKSVDISKLWNIGLEILNKVNPEASSEYMERLIARYPARPSINNSYPNRNAEHFFPAYIMLLIQRQEYNKAMKLLDEYLLLPPYNQNPALHEYSGMLCFELAKEEASESERTKWIEKAKYNFSNAGIDVEL.

The protein resides in the nucleus. Its function is as follows. Subunit of a multiprotein complex essential for the initiation of rDNA transcription by RNA polymerase I. Binding to the DNA template is dependent on the initial binding of other factors. The sequence is that of RNA polymerase I-specific transcription initiation factor rrn11 (rrn11) from Schizosaccharomyces pombe (strain 972 / ATCC 24843) (Fission yeast).